We begin with the raw amino-acid sequence, 235 residues long: Ribosomal RNA small subunit methyltransferase G (235 aa).

S-adenosyl-L-methionine contacts are provided by residues G98, M103, 149–150 (VE), and R164.

This sequence belongs to the methyltransferase superfamily. RNA methyltransferase RsmG family.

It localises to the cytoplasm. It carries out the reaction guanosine(527) in 16S rRNA + S-adenosyl-L-methionine = N(7)-methylguanosine(527) in 16S rRNA + S-adenosyl-L-homocysteine. Its function is as follows. Specifically methylates the N7 position of guanine in position 527 of 16S rRNA. This is Ribosomal RNA small subunit methyltransferase G from Cupriavidus pinatubonensis (strain JMP 134 / LMG 1197) (Cupriavidus necator (strain JMP 134)).